We begin with the raw amino-acid sequence, 110 residues long: Bowman-Birk type proteinase inhibitor (110 aa).

The first 28 residues, 1–28 (MVLMNKKAIMKLALMLFLLGFTANVVDA), serve as a signal peptide directing secretion. The propeptide occupies 29–42 (RFDSTSFITQVLSN). Disulfide bonds link C50–C103, C51–C66, C54–C99, C56–C64, C73–C80, C77–C92, and C82–C90.

As to quaternary structure, monomer.

Functionally, inhibitor of trypsin and of chymotrypsin. The protein is Bowman-Birk type proteinase inhibitor of Lens culinaris (Lentil).